The primary structure comprises 557 residues: MILLSIEGMTCPSCVAHVKEALDAIEGVNKVEISYENARATITTNGGVSVTVLIGAIEALGYIAKESTGTAKEITSPNDCCDNENASNTESNQTQHVAIIGTGSGAFACAIKAAEGGAKVTLIEGADVIGGCCVNVGCVPSKILIRAAQLAQQQRNNPFTGLENHAPQLSRALLTQQQTARVEELRAAKYQNILETNPALSLLKGWAQFKNANTLIVRKNDGTEQAVHADKILIATGSTPTIPPIDGLTETPYWTSTEALFAQELPQHLVVIGSSVVALEIAQAYRRLGSEVTILARHTLLYREDPLLGEKLTGCFEKEGIRVLNSTQATKVTHDGSQFTLETNAGDLRCDRLLVSTGRHANTCQLNLGAVGVTTNKKGEIVVNERMETNVPGIYAAGDCCNMPQFVYVAAAAGSRSGINMTGGYAKLDLSTMPAVIFTDPQVATVGLTEEQANAQDIETDSRVLEMENVPRALANFETDGFIKLVTEKATGRLIGAQILAHEGGELIQSAALAIRNRMTVTELADQLFPYLTMVEGLKLCAQTFNKDVKELSCCAG.

In terms of domain architecture, HMA spans 1–65 (MILLSIEGMT…AIEALGYIAK (65 aa)). A metal cation is bound by residues Cys-11 and Cys-14. FAD is bound by residues Ala-106 and Ala-126. A disulfide bond links Cys-133 and Cys-138. Residues Lys-142, Ala-207, Asp-399, and Val-407 each coordinate FAD. Hg(2+) contacts are provided by Cys-554 and Cys-555.

It belongs to the class-I pyridine nucleotide-disulfide oxidoreductase family. Homodimer. Requires FAD as cofactor.

It carries out the reaction Hg + NADP(+) + H(+) = Hg(2+) + NADPH. In terms of biological role, resistance to Hg(2+) in bacteria appears to be governed by a specialized system which includes mercuric reductase. MerA protein is responsible for volatilizing mercury as Hg(0). The protein is Mercuric reductase (merA) of Shewanella putrefaciens (Pseudomonas putrefaciens).